A 722-amino-acid chain; its full sequence is Endoglucanase F (722 aa).

The signal sequence occupies residues 1–29 (MSKNFKRVGAVAVAAAMSLSIMATTSINA). Residues 142 to 165 (PEFQDPSKYPSPLDTSQPVGRDPI) form a disordered region. Polar residues predominate over residues 154–165 (LDTSQPVGRDPI). One can recognise a Dockerin domain in the interval 661–722 (PEKLLGDVNG…LLKKALLSIQ (62 aa)).

The protein belongs to the glycosyl hydrolase 48 (cellulase L) family.

It catalyses the reaction Endohydrolysis of (1-&gt;4)-beta-D-glucosidic linkages in cellulose, lichenin and cereal beta-D-glucans.. In terms of biological role, probable endoglucanase involved in the degradation of cellulose or related beta-glucans. The protein is Endoglucanase F (celCCF) of Ruminiclostridium cellulolyticum (strain ATCC 35319 / DSM 5812 / JCM 6584 / H10) (Clostridium cellulolyticum).